We begin with the raw amino-acid sequence, 596 residues long: Elongation factor 4 (596 aa).

One can recognise a tr-type G domain in the interval Lys-2 to Val-184. Residues Asp-14–Thr-19 and Asn-131–Asp-134 each bind GTP.

Belongs to the TRAFAC class translation factor GTPase superfamily. Classic translation factor GTPase family. LepA subfamily.

The protein resides in the cell inner membrane. The catalysed reaction is GTP + H2O = GDP + phosphate + H(+). Functionally, required for accurate and efficient protein synthesis under certain stress conditions. May act as a fidelity factor of the translation reaction, by catalyzing a one-codon backward translocation of tRNAs on improperly translocated ribosomes. Back-translocation proceeds from a post-translocation (POST) complex to a pre-translocation (PRE) complex, thus giving elongation factor G a second chance to translocate the tRNAs correctly. Binds to ribosomes in a GTP-dependent manner. The chain is Elongation factor 4 from Pseudoalteromonas translucida (strain TAC 125).